A 156-amino-acid polypeptide reads, in one-letter code: ATP synthase subunit b (156 aa).

The chain crosses the membrane as a helical span at residues 12-32 (IAFAIFVWFCVKYVWPPITAA).

The protein belongs to the ATPase B chain family. In terms of assembly, F-type ATPases have 2 components, F(1) - the catalytic core - and F(0) - the membrane proton channel. F(1) has five subunits: alpha(3), beta(3), gamma(1), delta(1), epsilon(1). F(0) has three main subunits: a(1), b(2) and c(10-14). The alpha and beta chains form an alternating ring which encloses part of the gamma chain. F(1) is attached to F(0) by a central stalk formed by the gamma and epsilon chains, while a peripheral stalk is formed by the delta and b chains.

It is found in the cell inner membrane. F(1)F(0) ATP synthase produces ATP from ADP in the presence of a proton or sodium gradient. F-type ATPases consist of two structural domains, F(1) containing the extramembraneous catalytic core and F(0) containing the membrane proton channel, linked together by a central stalk and a peripheral stalk. During catalysis, ATP synthesis in the catalytic domain of F(1) is coupled via a rotary mechanism of the central stalk subunits to proton translocation. Functionally, component of the F(0) channel, it forms part of the peripheral stalk, linking F(1) to F(0). This is ATP synthase subunit b from Marinobacter nauticus (strain ATCC 700491 / DSM 11845 / VT8) (Marinobacter aquaeolei).